A 472-amino-acid polypeptide reads, in one-letter code: Siroheme synthase 1 (472 aa).

A precorrin-2 dehydrogenase /sirohydrochlorin ferrochelatase region spans residues Met1–Leu203. NAD(+)-binding positions include Glu22–Val23 and Gln43–Thr44. At Ser128 the chain carries Phosphoserine. Residues Gly215 to Ala472 are uroporphyrinogen-III C-methyltransferase. Pro224 provides a ligand contact to S-adenosyl-L-methionine. Residue Asp247 is the Proton acceptor of the active site. The active-site Proton donor is Lys269. S-adenosyl-L-methionine is bound by residues Gly300 to Asp302, Ile305, Thr330 to Ala331, Met382, and Gly411.

It in the N-terminal section; belongs to the precorrin-2 dehydrogenase / sirohydrochlorin ferrochelatase family. In the C-terminal section; belongs to the precorrin methyltransferase family.

The enzyme catalyses uroporphyrinogen III + 2 S-adenosyl-L-methionine = precorrin-2 + 2 S-adenosyl-L-homocysteine + H(+). It carries out the reaction precorrin-2 + NAD(+) = sirohydrochlorin + NADH + 2 H(+). It catalyses the reaction siroheme + 2 H(+) = sirohydrochlorin + Fe(2+). It participates in cofactor biosynthesis; adenosylcobalamin biosynthesis; precorrin-2 from uroporphyrinogen III: step 1/1. Its pathway is cofactor biosynthesis; adenosylcobalamin biosynthesis; sirohydrochlorin from precorrin-2: step 1/1. The protein operates within porphyrin-containing compound metabolism; siroheme biosynthesis; precorrin-2 from uroporphyrinogen III: step 1/1. It functions in the pathway porphyrin-containing compound metabolism; siroheme biosynthesis; siroheme from sirohydrochlorin: step 1/1. It participates in porphyrin-containing compound metabolism; siroheme biosynthesis; sirohydrochlorin from precorrin-2: step 1/1. Its function is as follows. Multifunctional enzyme that catalyzes the SAM-dependent methylations of uroporphyrinogen III at position C-2 and C-7 to form precorrin-2 via precorrin-1. Then it catalyzes the NAD-dependent ring dehydrogenation of precorrin-2 to yield sirohydrochlorin. Finally, it catalyzes the ferrochelation of sirohydrochlorin to yield siroheme. The protein is Siroheme synthase 1 of Yersinia pestis bv. Antiqua (strain Nepal516).